A 209-amino-acid polypeptide reads, in one-letter code: Adenylate kinase (209 aa).

ATP is bound at residue 10–15; the sequence is GAGKGT. Residues 30–59 form an NMP region; the sequence is STGDLFRAAIKEQTDLGKKVKAVIDSGALV. Residues T31, R36, 57-59, 85-88, and Q92 each bind AMP; these read ALV and GFPR. Positions 121 to 158 are LID; sequence GRRVCSSCGQSFHIEFVKPKKEGICDSCSGDLMIRPDD. Residue R122 participates in ATP binding. C125 and C128 together coordinate Zn(2+). 131-132 is an ATP binding site; the sequence is SF. Zn(2+)-binding residues include C145 and C148. AMP is bound by residues R155 and R166. P194 provides a ligand contact to ATP.

Belongs to the adenylate kinase family. Monomer.

Its subcellular location is the cytoplasm. The enzyme catalyses AMP + ATP = 2 ADP. It functions in the pathway purine metabolism; AMP biosynthesis via salvage pathway; AMP from ADP: step 1/1. Its function is as follows. Catalyzes the reversible transfer of the terminal phosphate group between ATP and AMP. Plays an important role in cellular energy homeostasis and in adenine nucleotide metabolism. This is Adenylate kinase from Treponema denticola (strain ATCC 35405 / DSM 14222 / CIP 103919 / JCM 8153 / KCTC 15104).